The sequence spans 156 residues: UPF0262 protein Jann_2882 (156 aa).

Belongs to the UPF0262 family.

The chain is UPF0262 protein Jann_2882 from Jannaschia sp. (strain CCS1).